Reading from the N-terminus, the 153-residue chain is MKACLLLFFYFSFICQLHGADVKIKQNESMMGSTAMTYDLSEEKLMKLKYKSQHGDSEASFRLYQYYCFTKNNIYKQLRFLERSASQGNVTAQFNYGVFLSDTNPTLSEYYNLNRAIYWMEFAVNNGNIDAKSKLQELKKLKRMDRRKNKENP.

A signal peptide spans 1–19; sequence MKACLLLFFYFSFICQLHG.

This is an uncharacterized protein from Escherichia coli (strain K12).